Consider the following 304-residue polypeptide: N-acetylmuramic acid 6-phosphate etherase (304 aa).

S2 is subject to Phosphoserine. Positions 59–222 (AYESFQNGGR…STAVMVKIGK (164 aa)) constitute an SIS domain. Residue E87 is the Proton donor of the active site. E118 is a catalytic residue.

This sequence belongs to the GCKR-like family. MurNAc-6-P etherase subfamily. In terms of assembly, homodimer.

The enzyme catalyses N-acetyl-D-muramate 6-phosphate + H2O = N-acetyl-D-glucosamine 6-phosphate + (R)-lactate. It participates in amino-sugar metabolism; N-acetylmuramate degradation. In terms of biological role, specifically catalyzes the cleavage of the D-lactyl ether substituent of MurNAc 6-phosphate, producing GlcNAc 6-phosphate and D-lactate. The protein is N-acetylmuramic acid 6-phosphate etherase of Bacillus subtilis (strain 168).